Here is a 222-residue protein sequence, read N- to C-terminus: UPF0758 protein YPN_3801 (222 aa).

The MPN domain maps to 100-222 (VLLNPGITQK…CVSFAERGWL (123 aa)). Zn(2+) contacts are provided by His171, His173, and Asp184. Positions 171 to 184 (HNHPSGKAEPSQAD) match the JAMM motif motif.

This sequence belongs to the UPF0758 family. YicR subfamily.

This is UPF0758 protein YPN_3801 from Yersinia pestis bv. Antiqua (strain Nepal516).